Here is a 223-residue protein sequence, read N- to C-terminus: N-(5'-phosphoribosyl)anthranilate isomerase (223 aa).

This sequence belongs to the TrpF family.

The catalysed reaction is N-(5-phospho-beta-D-ribosyl)anthranilate = 1-(2-carboxyphenylamino)-1-deoxy-D-ribulose 5-phosphate. The protein operates within amino-acid biosynthesis; L-tryptophan biosynthesis; L-tryptophan from chorismate: step 3/5. This Moorella thermoacetica (strain ATCC 39073 / JCM 9320) protein is N-(5'-phosphoribosyl)anthranilate isomerase.